The chain runs to 527 residues: NAD(P)H-quinone oxidoreductase chain 4 1 (527 aa).

13 consecutive transmembrane segments (helical) span residues Phe6–Ile26, Trp36–Ser56, Leu91–Phe111, Pro113–Val133, Leu136–Ile156, Phe169–Phe189, Leu212–His232, Thr243–Leu263, Ala275–Thr295, Ile306–Asp326, Gly331–Gly351, Leu387–Thr407, and Val417–Met437.

It belongs to the complex I subunit 4 family.

It is found in the cellular thylakoid membrane. The catalysed reaction is a plastoquinone + NADH + (n+1) H(+)(in) = a plastoquinol + NAD(+) + n H(+)(out). The enzyme catalyses a plastoquinone + NADPH + (n+1) H(+)(in) = a plastoquinol + NADP(+) + n H(+)(out). Its function is as follows. NDH-1 shuttles electrons from NAD(P)H, via FMN and iron-sulfur (Fe-S) centers, to quinones in the respiratory chain. The immediate electron acceptor for the enzyme in this species is believed to be plastoquinone. Couples the redox reaction to proton translocation (for every two electrons transferred, four hydrogen ions are translocated across the cytoplasmic membrane), and thus conserves the redox energy in a proton gradient. In Microcystis aeruginosa (strain NIES-843 / IAM M-2473), this protein is NAD(P)H-quinone oxidoreductase chain 4 1.